Reading from the N-terminus, the 680-residue chain is Lipase 1 (680 aa).

The first 34 residues, 1 to 34, serve as a signal peptide directing secretion; the sequence is MKSQNKYSIRKFSVGASSILIATLLFLSGGQAQA. The propeptide occupies 35–290; it reads AEKQVNMGNS…AKAKDDQTNK (256 aa). The interval 82–259 is disordered; that stretch reads KNLHNDKTIS…PTKDNDKKNG (178 aa). The span at 84 to 112 shows a compositional bias: basic and acidic residues; it reads LHNDKTISEENHRKTDDLNKDQLKDDKKS. Residues 125–138 show a composition bias toward polar residues; sequence KNNNANPSDVNQGL. The segment covering 148-170 has biased composition (low complexity); that stretch reads SKVASQQQSKEADNSQDSNANNN. Residues 204-223 are compositionally biased toward polar residues; sequence QPQQNNQANDKITNYNFNNE. The segment covering 224-234 has biased composition (basic and acidic residues); sequence QEVKPQKDEKT. Over residues 235–246 the composition is skewed to polar residues; sequence LSVSDLKNNQKS. Serine 408 functions as the Nucleophile in the catalytic mechanism. Aspartate 600 serves as the catalytic Charge relay system. Aspartate 638 contributes to the Ca(2+) binding site. Histidine 639 functions as the Charge relay system in the catalytic mechanism. Positions 641, 646, and 649 each coordinate Ca(2+).

The protein belongs to the AB hydrolase superfamily. Lipase family.

The protein localises to the secreted. It carries out the reaction a triacylglycerol + H2O = a diacylglycerol + a fatty acid + H(+). The chain is Lipase 1 (lip1) from Staphylococcus aureus (strain MSSA476).